The primary structure comprises 534 residues: uncharacterized protein (534 aa).

Residues Met1–Ala22 form the signal peptide. An N-linked (GlcNAc...) asparagine glycan is attached at Asn31. Disordered stretches follow at residues Pro70 to Ser145 and Ser176 to Pro418. Asn426 carries an N-linked (GlcNAc...) asparagine glycan.

It localises to the endoplasmic reticulum. It is found in the cell membrane. This is an uncharacterized protein from Schizosaccharomyces pombe (strain 972 / ATCC 24843) (Fission yeast).